The sequence spans 477 residues: MEFPSSPPPSYETVMAQVPSILAPLVPPRYKGATEGRNSIRYSQLPPLFDTTKLYLIDNKSSDIQALNYQNDHSNFLTTVVQNANYTPMEASTQSIQLDERSRWGGDFRSILHMNMPNVTEYMFSNSFKAYLPATADASGKVLTYEWYTLTIPEGNYSEVMLLDLLNNAVVENYLAHGRQHNVKEEDIGLKFDTRNFYLGFDPETELVMPGFYTNEAFHPDIILSPGCAVDFTHSRLNNFLGIRKRLPYQEGFIIKWEDLQGGNIPALLDLEIYNPDTPGDNITPLLQDSKARSYHVGEDPSAGSTFTSYRSWFLAYNYGPVDGIKSKTVLVAPDITCGVEQIYWSLPDMAVDPVTFTSSHNPSSYPVVGTELLPLLPRSFYNGSSVYSQLLQESTAQTHVFNRFPENAILKRPPAPTIISISENVPALSNHGTLPLKNNIPGVQRVTITDARRRVCPYVYKSLGVVVPRVLSSKTF.

The protein belongs to the adenoviridae penton family. In terms of assembly, interacts with the fiber protein (via N-terminal tail region). Interacts with the capsid vertex protein; this interaction binds the penton base to neighboring peripentonal hexons.

It is found in the virion. The protein localises to the host nucleus. Functionally, major capsid protein that self-associates to form penton base pentamers, each in the shape of a pentagon, situated at the 12 vertices of the pseudo T=25 capsid. Involved in virus secondary attachment to host cell after initial attachment by the fiber protein, and in endocytosis of virions. As the virus enters the host cell, penton proteins are shed concomitant with virion acidification in the endosome. This chain is Penton protein, found in Canis lupus familiaris (Dog).